The primary structure comprises 623 residues: Prothrombin (623 aa).

Residues 1–24 (MAHVRGLQLPGCLALAALCTLVHS) form the signal peptide. A propeptide spanning residues 25–43 (QHVFLAPQQALSLLQRVRR) is cleaved from the precursor. The 47-residue stretch at 44 to 90 (ANSVFLEEVRKGNLERECVEETCSYEEAFEALESSTATDVFWAKYTA) folds into the Gla domain. A 4-carboxyglutamate mark is found at Glu50, Glu51, Glu58, Glu60, Glu63, Glu64, Glu69, Glu70, Glu73, and Glu76. Cys61 and Cys66 are disulfide-bonded. 11 disulfides stabilise this stretch: Cys91/Cys104, Cys109/Cys187, Cys130/Cys170, Cys158/Cys182, Cys214/Cys292, Cys235/Cys275, Cys263/Cys287, Cys337/Cys483, Cys392/Cys408, Cys537/Cys551, and Cys565/Cys595. 2 consecutive Kringle domains span residues 108–187 (NCAE…IPVC) and 213–292 (QCVP…LNYC). N-linked (GlcNAc...) asparagine glycans are attached at residues Asn122 and Asn144. Residues 365–619 (IVEGSDAEIG…LKKWIQKVID (255 aa)) form the Peptidase S1 domain. His407 functions as the Charge relay system in the catalytic mechanism. Asn417 carries N-linked (GlcNAc...) asparagine glycosylation. Asp463 acts as the Charge relay system in catalysis. The tract at residues 552-574 (AGYKPDEGKRGDACEGDSGGPFV) is high affinity receptor-binding region which also known as the TP508 peptide. Ser569 serves as the catalytic Charge relay system.

Belongs to the peptidase S1 family. As to quaternary structure, heterodimer (named alpha-thrombin) of a light and a heavy chain; disulfide-linked. Forms a heterodimer with SERPINA5. In plasma, interacts (via N-terminus) with alpha-1-microglobulin; this interaction does not prevent the activation of prothrombin to thrombin. Post-translationally, the gamma-carboxyglutamyl residues, which bind calcium ions, result from the carboxylation of glutamyl residues by a microsomal enzyme, the vitamin K-dependent carboxylase. The modified residues are necessary for the calcium-dependent interaction with a negatively charged phospholipid surface, which is essential for the conversion of prothrombin to thrombin. In the penultimate step of the coagulation cascade, prothrombin is converted to thrombin by the prothrombinase complex composed of factor Xa (F10), cofactor Va (F5), and phospholipids. This activation requires factor Xa-catalyzed sequential cleavage at 2 sites, Arg-315 and Arg-364, along 2 possible pathways. In the first pathway, the first cleavage occurs at Arg-315, leading to the formation of the inactive intermediate prethrombin-2. This pathway preferentially occurs on platelets and in the absence of cofactor Va. In the second pathway, the first cleavage occurs at Arg-364, which separates protease domain into 2 chains that remain connected through a disulfide bond and generates the active intermediate meizothrombin. The presence of cofactor Va directs activation along the meizothrombin pathway and greatly accelerates the rate of cleavage at Arg-364, but has a smaller effect on the cleavage of meizothrombin at Arg-315. Meizothrombin accumulates as an intermediate when prothrombinase is assembled on the membrane of red blood cells.

It catalyses the reaction Selective cleavage of Arg-|-Gly bonds in fibrinogen to form fibrin and release fibrinopeptides A and B.. Its activity is regulated as follows. Activity is promoted in the presence of negatively charged surfaces, such as polyphosphate and dextran sulfate. Inhibited by SERPINA5. In terms of biological role, thrombin, which cleaves bonds after Arg and Lys, converts fibrinogen to fibrin and activates factors V, VII, VIII, XIII, and, in complex with thrombomodulin, protein C. Functions in blood homeostasis, inflammation and wound healing. Activates coagulation factor XI (F11); activation is promoted by the contact with negatively charged surfaces. Triggers the production of pro-inflammatory cytokines, such as MCP-1/CCL2 and IL8/CXCL8, in endothelial cells. This Pongo abelii (Sumatran orangutan) protein is Prothrombin (F2).